Here is a 102-residue protein sequence, read N- to C-terminus: Hemoglobin subunit beta-Z (102 aa).

The Globin domain occupies 1-102 (FGNLSSAQAI…VANALSHKYH (102 aa)). Positions 19 and 48 each coordinate heme b.

Belongs to the globin family. As to quaternary structure, heterotetramer of two alpha chains and two beta chains.

This is an embryonic beta chain. This Mesocricetus auratus (Golden hamster) protein is Hemoglobin subunit beta-Z (HBBZ).